Here is a 132-residue protein sequence, read N- to C-terminus: MAEKLNFDLVSPERLLFSGQVDMVVIPGSEGDMGIMAGHAPVMSTLRPGIIEVENEGAPRQRIFVRGGFAEVTPAGLTVLAEFTVPLADLDATALDREIALADKDVADAKNDDKRQSALEKLDHLKELRHTV.

Belongs to the ATPase epsilon chain family. F-type ATPases have 2 components, CF(1) - the catalytic core - and CF(0) - the membrane proton channel. CF(1) has five subunits: alpha(3), beta(3), gamma(1), delta(1), epsilon(1). CF(0) has three main subunits: a, b and c.

The protein resides in the cell inner membrane. Produces ATP from ADP in the presence of a proton gradient across the membrane. The protein is ATP synthase epsilon chain of Parvibaculum lavamentivorans (strain DS-1 / DSM 13023 / NCIMB 13966).